Consider the following 431-residue polypeptide: F-box protein pof14 (431 aa).

The F-box; atypical domain maps to 172 to 186 (CPDEILQLIFSYCYD).

Component of the E3 ubiquitin ligase Skp1-Cullin-1-F-box (SCF) complex. Interacts with skp1, cul1 and erg9.

It is found in the cytoplasm. The protein resides in the nucleus. It localises to the endoplasmic reticulum. Expression is induced during oxidative stress. Plays an essential, SCF-independent, role in the stress response to hydrogen peroxide for survival, by negatively regulating ergosterol synthesis via direct binding to the squalene synthase erg9. This Schizosaccharomyces pombe (strain 972 / ATCC 24843) (Fission yeast) protein is F-box protein pof14 (pof14).